A 148-amino-acid chain; its full sequence is Macrodomain Ter protein (148 aa).

The protein belongs to the MatP family. In terms of assembly, homodimer.

Its subcellular location is the cytoplasm. Required for spatial organization of the terminus region of the chromosome (Ter macrodomain) during the cell cycle. Prevents early segregation of duplicated Ter macrodomains during cell division. Binds specifically to matS, which is a 13 bp signature motif repeated within the Ter macrodomain. The sequence is that of Macrodomain Ter protein from Pasteurella multocida (strain Pm70).